Here is a 239-residue protein sequence, read N- to C-terminus: 2,3,4,5-tetrahydropyridine-2,6-dicarboxylate N-acetyltransferase (239 aa).

It belongs to the transferase hexapeptide repeat family. DapH subfamily.

The enzyme catalyses (S)-2,3,4,5-tetrahydrodipicolinate + acetyl-CoA + H2O = L-2-acetamido-6-oxoheptanedioate + CoA. It participates in amino-acid biosynthesis; L-lysine biosynthesis via DAP pathway; LL-2,6-diaminopimelate from (S)-tetrahydrodipicolinate (acetylase route): step 1/3. Functionally, catalyzes the transfer of an acetyl group from acetyl-CoA to tetrahydrodipicolinate. The protein is 2,3,4,5-tetrahydropyridine-2,6-dicarboxylate N-acetyltransferase of Staphylococcus aureus (strain JH9).